The chain runs to 507 residues: Protein DETOXIFICATION 39 (507 aa).

12 consecutive transmembrane segments (helical) span residues 58 to 78 (VLFR…GMGI), 92 to 112 (LAAA…MLGM), 141 to 161 (IVLA…YPIL), 178 to 198 (IAGL…QKFL), 209 to 229 (FISA…VYVM), 233 to 253 (FMGI…SQCF), 287 to 307 (AVMI…AGLL), 318 to 338 (SICM…NAAV), 359 to 379 (WTAT…VIWF), 403 to 423 (FLAI…VAVG), 433 to 453 (VNVG…GFTF), and 459 to 479 (GIWT…LYVT).

It belongs to the multi antimicrobial extrusion (MATE) (TC 2.A.66.1) family.

Its subcellular location is the membrane. The polypeptide is Protein DETOXIFICATION 39 (Arabidopsis thaliana (Mouse-ear cress)).